The primary structure comprises 386 residues: Succinate--CoA ligase [ADP-forming] subunit beta (386 aa).

The ATP-grasp domain maps to 9–244; that stretch reads KEILRKYGVP…HDEEDPLETR (236 aa). Residues K46, 53 to 55, E99, C102, and E107 contribute to the ATP site; that span reads GRG. Positions 199 and 213 each coordinate Mg(2+). Residues N264 and 321–323 each bind substrate; that span reads GIM.

The protein belongs to the succinate/malate CoA ligase beta subunit family. As to quaternary structure, heterotetramer of two alpha and two beta subunits. The cofactor is Mg(2+).

The enzyme catalyses succinate + ATP + CoA = succinyl-CoA + ADP + phosphate. It carries out the reaction GTP + succinate + CoA = succinyl-CoA + GDP + phosphate. Its pathway is carbohydrate metabolism; tricarboxylic acid cycle; succinate from succinyl-CoA (ligase route): step 1/1. Functionally, succinyl-CoA synthetase functions in the citric acid cycle (TCA), coupling the hydrolysis of succinyl-CoA to the synthesis of either ATP or GTP and thus represents the only step of substrate-level phosphorylation in the TCA. The beta subunit provides nucleotide specificity of the enzyme and binds the substrate succinate, while the binding sites for coenzyme A and phosphate are found in the alpha subunit. The chain is Succinate--CoA ligase [ADP-forming] subunit beta from Rickettsia prowazekii (strain Madrid E).